The sequence spans 391 residues: Methyltransferase/ribosomally synthesized type I borosin cyclic peptide precursor cmaMA (391 aa).

Residues 1-253 (MDATANPKAG…TISTFYLPPK (253 aa)) form a methyltransferase domain region. Catalysis depends on residues R72, Y76, and Y98. Residues Y98, H100, V103, A130, Q172, A215, S246, and T247 each coordinate S-adenosyl-L-methionine. Residues 254–373 (APSAKVSLNR…AQLSGALKEG (120 aa)) are clasp domain. Residues 374 to 376 (GVP) are precursor leader. L382 carries the post-translational modification N-methylleucine. F385 and F386 each carry N-methylphenylalanine. N-methylisoleucine is present on residues I387 and I388.

In the N-terminal section; belongs to the precorrin methyltransferase family. In terms of assembly, homodimer. Post-translationally, cmaMA automethylates at Leu-382, Phe-385, Phe-386, Ile-387 and Ile-388 before being processed by the prolyloligopeptidase ledP which likely forms a peptidyl ester upon removal of the follower propeptide, which then undergoes macrocyclization with the N-terminus of the modified core peptide. Peptide backbone alpha-N-methylations change the physicochemical properties of amide bonds to provide structural constraints and other favorable characteristics including biological membrane permeability to peptides.

Its pathway is secondary metabolite biosynthesis. Its function is as follows. Fusion protein of the methyltransferase cmaM and a type I borosin core peptide; part of the gene cluster that mediates the biosynthesis of a type I borosin, a highly methylated cyclic peptide with potent biological activities. Type I borosins derive from the C-terminus of the fusion protein, and it is the same protein that methylates its own C-terminus using S-adenosyl methionine (SAM). The C-terminus is subsequently cleaved off and macrocyclized by a prolyloligopeptidase to give the final product. The protein is Methyltransferase/ribosomally synthesized type I borosin cyclic peptide precursor cmaMA of Coprinopsis marcescibilis (Agaric fungus).